The sequence spans 154 residues: Transcriptional repressor NrdR (154 aa).

Residues 3–34 (CPFCGANDTKVIDSRLVAEGEQVRRRRECLAC) fold into a zinc finger. The ATP-cone domain maps to 49-139 (PRLIKQDGSR…VYRRFQDLNE (91 aa)).

It belongs to the NrdR family. Requires Zn(2+) as cofactor.

In terms of biological role, negatively regulates transcription of bacterial ribonucleotide reductase nrd genes and operons by binding to NrdR-boxes. The protein is Transcriptional repressor NrdR of Pseudomonas syringae pv. tomato (strain ATCC BAA-871 / DC3000).